The primary structure comprises 1585 residues: Adhesion G protein-coupled receptor B2 (1585 aa).

The first 32 residues, 1–32, serve as a signal peptide directing secretion; sequence MENTGWMGKGHRMTPACPLLLSVILSLRLATA. Topologically, residues 33–936 are extracellular; that stretch reads FDPAPSACSA…ELAGSPSVPL (904 aa). N-linked (GlcNAc...) asparagine glycosylation is found at N106, N191, and N192. Residues 229-238 are compositionally biased toward low complexity; sequence AGAGSTTTTS. The interval 229–271 is disordered; it reads AGAGSTTTTSPGPPAAHTLSNALVPGGPAPPAEADLHSGSSND. S266 is a glycosylation site (O-linked (Xyl...) (chondroitin sulfate) serine). TSP type-1 domains are found at residues 309 to 362, 364 to 417, 419 to 472, and 475 to 528; these read DPAA…ATCP, HGVW…AACP, EGQW…LECP, and DSKW…KRCP. Cystine bridges form between C321–C355, C325–C361, C336–C345, C376–C411, C380–C416, C391–C401, C431–C466, C435–C471, C446–C456, C487–C522, C491–C527, C502–C512, C534–C569, and C557–C587. N356 carries N-linked (GlcNAc...) asparagine glycosylation. N437 carries N-linked (GlcNAc...) asparagine glycosylation. N-linked (GlcNAc...) asparagine glycosylation is found at N560 and N645. A GAIN-B domain is found at 757–924; sequence DRLFLPKEVL…AVLAQPPKDL (168 aa). A disordered region spans residues 767 to 806; it reads SLSSPGKPATSGAAGSPGRGRGPGTVPPGPGHSHQRLLPA. Positions 769–780 are enriched in low complexity; that stretch reads SSPGKPATSGAA. N-linked (GlcNAc...) asparagine glycosylation occurs at N867. 2 disulfides stabilise this stretch: C874/C906 and C894/C908. The tract at residues 874 to 924 is GPS; it reads CASWDYSRADASSGDWDTENCQTLETQAAHTRCQCQHLSTFAVLAQPPKDL. The chain crosses the membrane as a helical span at residues 937 to 957; sequence VIGCAVSCMALLTLLAIYAAF. The Cytoplasmic segment spans residues 958-965; the sequence is WRFIKSER. A helical membrane pass occupies residues 966 to 986; the sequence is SIILLNFCLSILASNILILVG. Topologically, residues 987 to 994 are extracellular; it reads QSRVLSKG. Residues 995–1015 traverse the membrane as a helical segment; the sequence is VCTMTAAFLHFFFLSSFCWVL. The Cytoplasmic portion of the chain corresponds to 1016 to 1036; sequence TEAWQSYLAVIGRMRTRLVRK. A helical transmembrane segment spans residues 1037 to 1057; the sequence is RFLCLGWGLPALVVAVSVGFT. Residues 1058–1078 lie on the Extracellular side of the membrane; the sequence is RTKGYGTSSYCWLSLEGGLLY. A helical transmembrane segment spans residues 1079–1099; it reads AFVGPAAVIVLVNMLIGIIVF. Over 1100–1121 the chain is Cytoplasmic; the sequence is NKLMARDGISDKSKKQRAGSER. The helical transmembrane segment at 1122-1142 threads the bilayer; sequence CPWASLLLPCSACGAVPSPLL. Topologically, residues 1143 to 1153 are extracellular; sequence SSASARNAMAS. A helical transmembrane segment spans residues 1154 to 1174; that stretch reads LWSSCVVLPLLALTWMSAVLA. Topologically, residues 1175–1585 are cytoplasmic; that stretch reads MTDRRSVLFQ…PPDGDFQTEV (411 aa). Residue Y1351 is modified to Phosphotyrosine. 3 disordered regions span residues 1359–1385, 1423–1454, and 1498–1585; these read LSLQ…PRRA, FQPP…GSTM, and YRSQ…QTEV. Residues 1372-1382 show a composition bias toward basic and acidic residues; that stretch reads DAPRARPEGTP. Residues 1543 to 1552 are compositionally biased toward polar residues; it reads SWSTFKSMTL. The segment covering 1575-1585 has biased composition (acidic residues); sequence EPPDGDFQTEV.

Belongs to the G-protein coupled receptor 2 family. Adhesion G-protein coupled receptor (ADGR) subfamily. As to quaternary structure, heterodimer of 2 chains generated by proteolytic processing; the large extracellular N-terminal fragment and the membrane-bound C-terminal fragment predominantly remain associated and non-covalently linked. Interacts with GABPB2. Interacts (via carboxy-terminus) with TAX1BP3. Interacts with GNAZ. Interacts with SH3GL2. Post-translationally, glycosylated. Autoproteolytically processed at the GPS region of the GAIN-B domain; this cleavage modulates receptor activity. Additionally, furin is involved in the cleavage at another site, in the middle of the extracellular domain, generating a soluble fragment. As to expression, detected in cerebrospinal fluid (at protein level). Strongly expressed in brain. Also detected in heart, thymus, skeletal muscle, and different cell lines.

It is found in the cell membrane. The protein localises to the secreted. Its activity is regulated as follows. Receptor activity is regulated by proteolytic processing. The long N-terminal has a an inhibitory effect on the constitutive signaling activity. Removal of the N-terminal region induces an increase of the receptor activity. Orphan G-protein coupled receptor involved in cell adhesion and probably in cell-cell interactions. Activates NFAT-signaling pathway, a transcription factor, via the G-protein GNAZ. Involved in angiogenesis inhibition. In Homo sapiens (Human), this protein is Adhesion G protein-coupled receptor B2.